Here is a 901-residue protein sequence, read N- to C-terminus: Protein translocase subunit SecA (901 aa).

ATP contacts are provided by residues Gln-87, 105 to 109 (GEGKT), and Asp-512. Residues 859–901 (HQDDDSAAAAALAAQTGERKVGRNDPCPCGSGKKYKQCHGRLQ) form a disordered region. Zn(2+) contacts are provided by Cys-885, Cys-887, Cys-896, and His-897. The span at 891–901 (KKYKQCHGRLQ) shows a compositional bias: basic residues.

It belongs to the SecA family. Monomer and homodimer. Part of the essential Sec protein translocation apparatus which comprises SecA, SecYEG and auxiliary proteins SecDF-YajC and YidC. Requires Zn(2+) as cofactor.

Its subcellular location is the cell inner membrane. The protein localises to the cytoplasm. The catalysed reaction is ATP + H2O + cellular proteinSide 1 = ADP + phosphate + cellular proteinSide 2.. In terms of biological role, part of the Sec protein translocase complex. Interacts with the SecYEG preprotein conducting channel. Has a central role in coupling the hydrolysis of ATP to the transfer of proteins into and across the cell membrane, serving both as a receptor for the preprotein-SecB complex and as an ATP-driven molecular motor driving the stepwise translocation of polypeptide chains across the membrane. The chain is Protein translocase subunit SecA from Escherichia coli (strain 55989 / EAEC).